Consider the following 221-residue polypeptide: Probable GTP-binding protein EngB (221 aa).

Residues 37–219 (QGIEIALAGR…RAAIVKLLRE (183 aa)) form the EngB-type G domain. GTP is bound by residues 45 to 52 (GRSNVGKS), 72 to 76 (GRTQE), 97 to 100 (DMPG), 164 to 167 (TKTD), and 198 to 200 (TSS). Residues Ser52 and Thr74 each coordinate Mg(2+).

It belongs to the TRAFAC class TrmE-Era-EngA-EngB-Septin-like GTPase superfamily. EngB GTPase family. Requires Mg(2+) as cofactor.

In terms of biological role, necessary for normal cell division and for the maintenance of normal septation. The chain is Probable GTP-binding protein EngB from Afipia carboxidovorans (strain ATCC 49405 / DSM 1227 / KCTC 32145 / OM5) (Oligotropha carboxidovorans).